The primary structure comprises 645 residues: Chaperone protein DnaK (645 aa).

Thr-200 is subject to Phosphothreonine; by autocatalysis. Residues 603-645 (AYSAQKDSGTSTDSTASDTSGNPEERVVDSEYQEIKKDDEDKK) form a disordered region. Over residues 609–623 (DSGTSTDSTASDTSG) the composition is skewed to low complexity. A compositionally biased stretch (basic and acidic residues) spans 625–645 (PEERVVDSEYQEIKKDDEDKK).

Belongs to the heat shock protein 70 family.

Functionally, acts as a chaperone. This is Chaperone protein DnaK from Anaplasma marginale (strain St. Maries).